Reading from the N-terminus, the 109-residue chain is Cell division suppressor protein YneA (109 aa).

The region spanning 39-90 is the LysM domain; the sequence is SEVNVNEGDSLWALADQYAGKSDMAKADFVSWVEKENNLSDGHVEAGDSVVI.

It belongs to the YneA family.

The protein resides in the cytoplasm. Its function is as follows. Inhibits cell division during the SOS response. Affects a later stage of the cell division protein assembly, after the assembly of the Z ring, by probably suppressing recruitment of FtsL and/or DivIC to the division machinery. The sequence is that of Cell division suppressor protein YneA from Listeria monocytogenes serovar 1/2a (strain ATCC BAA-679 / EGD-e).